A 3393-amino-acid polypeptide reads, in one-letter code: Genome polyprotein (3393 aa).

The Cytoplasmic segment spans residues 1-91 (MVNPKGVNVM…GVSRRKKRRS (91 aa)). The hydrophobic; homodimerization of capsid protein C stretch occupies residues 28-60 (VSRGLRGFVLFVLTQLFMGRKLTPNVRRLWKSS). Residues 91-108 (SATTSGTVFMAMLGLTLA) constitute a propeptide, ER anchor for the capsid protein C, removed in mature form by serine protease NS3. A helical membrane pass occupies residues 92 to 112 (ATTSGTVFMAMLGLTLAASVA). The Extracellular segment spans residues 113-231 (RHAHHTLINI…FETQVQKVEK (119 aa)). Residues Asn-121 and Asn-137 are each glycosylated (N-linked (GlcNAc...) asparagine; by host). The chain crosses the membrane as a helical span at residues 232–252 (WIIRNPTYAIAAILMSWYIGN). Residues 253–257 (SLKQR) are Cytoplasmic-facing. Residues 258–272 (VVLLLLTLALGPAYA) traverse the membrane as a helical segment. Residues 273–713 (THCVGIPKRD…IHTVFGTAFH (441 aa)) are Extracellular-facing. 5 disulfide bridges follow: Cys-275–Cys-302, Cys-346–Cys-377, Cys-364–Cys-388, Cys-453–Cys-553, and Cys-570–Cys-600. The fusion peptide stretch occupies residues 370–383 (DRGWGNGCGLFGKG). A helical membrane pass occupies residues 714 to 734 (GIFGGLSWMTRILIGVLLVWL). At 735-745 (GLNSRNGTATT) the chain is on the cytoplasmic side. The chain crosses the membrane as a helical span at residues 746-763 (LMMLTGFIILFLSLGVGA). Residues 764–1112 (EVGCSVNWGQ…TPEKHLVRSW (349 aa)) lie on the Extracellular side of the membrane. Cystine bridges form between Cys-767/Cys-778, Cys-818/Cys-905, Cys-941/Cys-986, Cys-1043/Cys-1092, Cys-1054/Cys-1075, Cys-1054/Cys-1076, Cys-1075/Cys-1079, and Cys-1076/Cys-1079. N-linked (GlcNAc...) asparagine; by host glycosylation is found at Asn-893 and Asn-970. The chain crosses the membrane as a helical span at residues 1113–1133 (VTAGDSYPAWSIGLVAMFLFV). Residues 1134-1186 (DIMARSRPTRKMMIGGTMLLLAIMIMGELSYLDLLRYIIVVGEHFIERENGGD) lie on the Cytoplasmic side of the membrane. Residues 1187–1207 (VAYMAIMAASHLRPGLMAMVF) traverse the membrane as a helical segment. Topologically, residues 1208–1283 (AKSMWSPKQR…PVSMPVIRKA (76 aa)) are lumenal. A helical membrane pass occupies residues 1284 to 1304 (SMIIGTGGLLLSLWKGGGSSM). Residues 1305 to 1341 (RKGLPLFAASAARVLGLTKAHLSVLFILLITKNGKRT) are Cytoplasmic-facing. The chain crosses the membrane as a helical span at residues 1342-1362 (WPISECLAAVGIFGAAFGTMF). At 1363 to 1365 (SED) the chain is on the lumenal side. A helical membrane pass occupies residues 1366–1386 (ETLLGPLALVGVVLIVYTMFT). Residues 1387–1438 (QSDGLELVKAADISWSDEAVVSGEARRFDVALNDSGEFKLLDEPPVSWLNVS) lie on the Cytoplasmic side of the membrane. The segment at 1393–1432 (LVKAADISWSDEAVVSGEARRFDVALNDSGEFKLLDEPPV) is interacts with and activates NS3 protease. Positions 1439–1459 (FLVVAIVASSLHPIALVVTLV) form an intramembrane region, helical. Topologically, residues 1460 to 2137 (AWTYWRTEKR…KLALQQAPEA (678 aa)) are cytoplasmic. The 180-residue stretch at 1470-1649 (SGVLWDVPLA…QPGSVAEVET (180 aa)) folds into the Peptidase S7 domain. Residues His-1521, Asp-1545, and Ser-1606 each act as charge relay system; for serine protease NS3 activity in the active site. The Helicase ATP-binding domain maps to 1653–1809 (DKMLRKGEFT…ESNAEIEDVK (157 aa)). The segment at 1657–1660 (RKGE) is important for RNA-binding. Residue 1666 to 1673 (YHPGAGKT) participates in ATP binding. The short motif at 1757–1760 (DEAH) is the DEAH box element. A Helicase C-terminal domain is found at 1804–1984 (EIEDVKKEIP…VAPLYEEEAS (181 aa)). A helical transmembrane segment spans residues 2138 to 2158 (VSTLLLLGMMAICTLGLVILL). The Lumenal portion of the chain corresponds to 2159–2168 (MKPKATDKMS). The helical intramembrane region spans 2169–2184 (MAMVTMAITGYLLKLG). Position 2185 (Gly-2185) is a topological domain, lumenal. Residues 2186–2206 (MTHAQVGGILLVFFIMMVVII) form a helical membrane-spanning segment. The Cytoplasmic portion of the chain corresponds to 2207–2221 (PESGTQRSINDNKLA). The chain crosses the membrane as a helical span at residues 2222–2236 (YVIILVGLVIGGVAC). At 2237–2275 (NELGWLEKTKADLFGNNMTHAQTVVLPTINWNWLDFRPG) the chain is on the lumenal side. The helical intramembrane region spans 2276–2296 (AAWSLYVGMATFLTPVFVHWI). At 2297 to 2344 (KNEYGNASLTGITPTAGILGALNQGVPFVKLNTSVGVLLLSVWNNFTT) the chain is on the lumenal side. The helical transmembrane segment at 2345–2365 (SSMLAAMVMLACHCLFVLPGV) threads the bilayer. The Cytoplasmic segment spans residues 2366 to 2408 (RAQCLREAQIRVFHGVAKNPMVDGNPTVDLEKENDMPDLYEKK). A helical transmembrane segment spans residues 2409–2429 (LALVALGMAAVLNAAMVRTAL). The Lumenal portion of the chain corresponds to 2430–2457 (TTAEMVVLGSAAVGPLLEGNTSAFWNGP). The helical transmembrane segment at 2458–2478 (LAVAVAGVMRGNHYALIGIVY) threads the bilayer. The Cytoplasmic portion of the chain corresponds to 2479-3393 (NLWLLKTARR…QRCSAYGELL (915 aa)). The region spanning 2489–2753 (GGSSALTYGE…DLIYPTGTRS (265 aa)) is the mRNA cap 0-1 NS5-type MT domain. Ser-2544 is an S-adenosyl-L-methionine binding site. Ser-2544 carries the phosphoserine modification. Residue Lys-2549 is the For 2'-O-MTase activity of the active site. S-adenosyl-L-methionine is bound by residues Gly-2574, Trp-2575, Thr-2592, Leu-2593, Asp-2619, and Ile-2620. Catalysis depends on Asp-2634, which acts as the For 2'-O-MTase activity. Ile-2635 contributes to the S-adenosyl-L-methionine binding site. Catalysis depends on for 2'-O-MTase activity residues Lys-2670 and Glu-2706. Tyr-2708 serves as a coordination point for S-adenosyl-L-methionine. The Nuclear localization signal motif lies at 2860 to 2893 (REIMKVVNQWLFDYLGRTKQPRICTKEEFINKVR). Residues Glu-2927, His-2931, Cys-2936, and Cys-2939 each coordinate Zn(2+). A RdRp catalytic domain is found at 3017–3169 (GLVYADDTAG…APVDESFAGA (153 aa)). Residues His-3204, Cys-3220, and Cys-3339 each contribute to the Zn(2+) site.

It in the N-terminal section; belongs to the class I-like SAM-binding methyltransferase superfamily. mRNA cap 0-1 NS5-type methyltransferase family. As to quaternary structure, homodimer. Interacts (via N-terminus) with host EXOC1 (via C-terminus); this interaction results in EXOC1 degradation through the proteasome degradation pathway. In terms of assembly, forms heterodimers with envelope protein E in the endoplasmic reticulum and Golgi. Homodimer; in the endoplasmic reticulum and Golgi. Interacts with protein prM. Interacts with non-structural protein 1. As to quaternary structure, homodimer; Homohexamer when secreted. Interacts with envelope protein E. In terms of assembly, interacts (via N-terminus) with serine protease NS3. Forms a heterodimer with serine protease NS3. May form homooligomers. As to quaternary structure, forms a heterodimer with NS2B. Interacts with non-structural protein 2A (via N-terminus). Interacts with NS4B. Interacts with unphosphorylated RNA-directed RNA polymerase NS5; this interaction stimulates RNA-directed RNA polymerase NS5 guanylyltransferase activity. NS3 interacts with host PDCD6IP; this interaction contributes to virion release. In terms of assembly, interacts with serine protease NS3. Homodimer. Interacts with host STAT2; this interaction prevents the establishment of cellular antiviral state. Interacts with host TRIM23; this interaction leads to NS5 ubiquitination. Post-translationally, specific enzymatic cleavages in vivo yield mature proteins. The nascent capsid protein C contains a C-terminal hydrophobic domain that act as a signal sequence for translocation of prM into the lumen of the ER. Mature capsid protein C is cleaved at a site upstream of this hydrophobic domain by NS3. prM is cleaved in post-Golgi vesicles by a host furin, releasing the mature small envelope protein M, and peptide pr. Non-structural protein 2A-alpha, a C-terminally truncated form of non-structural protein 2A, results from partial cleavage by NS3. Specific enzymatic cleavages in vivo yield mature proteins peptide 2K acts as a signal sequence and is removed from the N-terminus of NS4B by the host signal peptidase in the ER lumen. Signal cleavage at the 2K-4B site requires a prior NS3 protease-mediated cleavage at the 4A-2K site. In terms of processing, cleaved in post-Golgi vesicles by a host furin, releasing the mature small envelope protein M, and peptide pr. This cleavage is incomplete as up to 30% of viral particles still carry uncleaved prM. N-glycosylated. Post-translationally, N-glycosylated. The excreted form is glycosylated and this is required for efficient secretion of the protein from infected cells. In terms of processing, polyubiquitinated; ubiquitination is probably mediated by host TRIM23 and is prerequisite for NS5-STAT2 interaction. NS5 is not ISGylated or sumoylated. Phosphorylated on serines residues. This phosphorylation may trigger NS5 nuclear localization.

Its subcellular location is the virion. The protein localises to the host nucleus. The protein resides in the host cytoplasm. It is found in the host perinuclear region. It localises to the secreted. Its subcellular location is the virion membrane. The protein localises to the host endoplasmic reticulum membrane. The enzyme catalyses Selective hydrolysis of -Xaa-Xaa-|-Yaa- bonds in which each of the Xaa can be either Arg or Lys and Yaa can be either Ser or Ala.. It carries out the reaction RNA(n) + a ribonucleoside 5'-triphosphate = RNA(n+1) + diphosphate. It catalyses the reaction a ribonucleoside 5'-triphosphate + H2O = a ribonucleoside 5'-diphosphate + phosphate + H(+). The catalysed reaction is ATP + H2O = ADP + phosphate + H(+). The enzyme catalyses a 5'-end (5'-triphosphoguanosine)-ribonucleoside in mRNA + S-adenosyl-L-methionine = a 5'-end (N(7)-methyl 5'-triphosphoguanosine)-ribonucleoside in mRNA + S-adenosyl-L-homocysteine. It carries out the reaction a 5'-end (N(7)-methyl 5'-triphosphoguanosine)-ribonucleoside in mRNA + S-adenosyl-L-methionine = a 5'-end (N(7)-methyl 5'-triphosphoguanosine)-(2'-O-methyl-ribonucleoside) in mRNA + S-adenosyl-L-homocysteine + H(+). Its function is as follows. Plays a role in virus budding by binding to the cell membrane and gathering the viral RNA into a nucleocapsid that forms the core of a mature virus particle. During virus entry, may induce genome penetration into the host cytoplasm after hemifusion induced by the surface proteins. Can migrate to the cell nucleus where it modulates host functions. Inhibits RNA silencing by interfering with host Dicer. Functionally, prevents premature fusion activity of envelope proteins in trans-Golgi by binding to envelope protein E at pH6.0. After virion release in extracellular space, gets dissociated from E dimers. In terms of biological role, acts as a chaperone for envelope protein E during intracellular virion assembly by masking and inactivating envelope protein E fusion peptide. prM is the only viral peptide matured by host furin in the trans-Golgi network probably to avoid catastrophic activation of the viral fusion activity in acidic Golgi compartment prior to virion release. prM-E cleavage is inefficient, and many virions are only partially matured. These uncleaved prM would play a role in immune evasion. Its function is as follows. May play a role in virus budding. Exerts cytotoxic effects by activating a mitochondrial apoptotic pathway through M ectodomain. May display a viroporin activity. Binds to host cell surface receptor and mediates fusion between viral and cellular membranes. Envelope protein is synthesized in the endoplasmic reticulum in the form of heterodimer with protein prM. They play a role in virion budding in the ER, and the newly formed immature particle is covered with 60 spikes composed of heterodimer between precursor prM and envelope protein E. The virion is transported to the Golgi apparatus where the low pH causes dissociation of PrM-E heterodimers and formation of E homodimers. prM-E cleavage is inefficient, and many virions are only partially matured. These uncleaved prM would play a role in immune evasion. Functionally, involved in immune evasion, pathogenesis and viral replication. Once cleaved off the polyprotein, is targeted to three destinations: the viral replication cycle, the plasma membrane and the extracellular compartment. Essential for viral replication. Required for formation of the replication complex and recruitment of other non-structural proteins to the ER-derived membrane structures. Excreted as a hexameric lipoparticle that plays a role against host immune response. Antagonizing the complement function. Binds to the host macrophages and dendritic cells. Inhibits signal transduction originating from Toll-like receptor 3 (TLR3). In terms of biological role, component of the viral RNA replication complex that functions in virion assembly and antagonizes the host immune response. Its function is as follows. Required cofactor for the serine protease function of NS3. May have membrane-destabilizing activity and form viroporins. Displays three enzymatic activities: serine protease, NTPase and RNA helicase. NS3 serine protease, in association with NS2B, performs its autocleavage and cleaves the polyprotein at dibasic sites in the cytoplasm: C-prM, NS2A-NS2B, NS2B-NS3, NS3-NS4A, NS4A-2K and NS4B-NS5. NS3 RNA helicase binds RNA and unwinds dsRNA in the 3' to 5' direction. Also plays a role in virus assembly. Functionally, regulates the ATPase activity of the NS3 helicase activity. NS4A allows NS3 helicase to conserve energy during unwinding. In terms of biological role, functions as a signal peptide for NS4B and is required for the interferon antagonism activity of the latter. Its function is as follows. Induces the formation of ER-derived membrane vesicles where the viral replication takes place. Inhibits interferon (IFN)-induced host STAT1 phosphorylation and nuclear translocation, thereby preventing the establishment of cellular antiviral state by blocking the IFN-alpha/beta pathway. Replicates the viral (+) and (-) RNA genome, and performs the capping of genomes in the cytoplasm. NS5 methylates viral RNA cap at guanine N-7 and ribose 2'-O positions. Besides its role in RNA genome replication, also prevents the establishment of cellular antiviral state by blocking the interferon-alpha/beta (IFN-alpha/beta) signaling pathway. IFN-I induces binding of NS5 to host IFN-activated transcription factor STAT2, preventing its transcriptional activity. Host TRIM23 is the E3 ligase that interacts with and polyubiquitinates NS5 to promote its binding to STAT2 and trigger IFN-I signaling inhibition. This Banzi virus (BANV) protein is Genome polyprotein.